A 561-amino-acid chain; its full sequence is NADH-quinone oxidoreductase subunit C/D (561 aa).

The tract at residues 1 to 152 (MLEKFSSKFN…YQVLYESDDL (152 aa)) is NADH dehydrogenase I subunit C. The tract at residues 176–561 (KYTFLNIGPS…LNIIAGELDR (386 aa)) is NADH dehydrogenase I subunit D.

In the N-terminal section; belongs to the complex I 30 kDa subunit family. It in the C-terminal section; belongs to the complex I 49 kDa subunit family. NDH-1 is composed of 13 different subunits. Subunits NuoB, CD, E, F, and G constitute the peripheral sector of the complex.

The protein localises to the cell inner membrane. The enzyme catalyses a quinone + NADH + 5 H(+)(in) = a quinol + NAD(+) + 4 H(+)(out). NDH-1 shuttles electrons from NADH, via FMN and iron-sulfur (Fe-S) centers, to quinones in the respiratory chain. The immediate electron acceptor for the enzyme in this species is believed to be ubiquinone. Couples the redox reaction to proton translocation (for every two electrons transferred, four hydrogen ions are translocated across the cytoplasmic membrane), and thus conserves the redox energy in a proton gradient. The polypeptide is NADH-quinone oxidoreductase subunit C/D (Campylobacter fetus subsp. fetus (strain 82-40)).